The sequence spans 500 residues: Formate-nitrite transporter 3 (500 aa).

At M1 to Q31 the chain is on the cytoplasmic side. The helical transmembrane segment at A32–A52 threads the bilayer. Topologically, residues Y53–K69 are extracellular. The chain crosses the membrane as a helical span at residues F70–L90. Over F91–C113 the chain is Cytoplasmic. The chain crosses the membrane as a helical span at residues I114–L134. At S135–Q164 the chain is on the extracellular side. The helical transmembrane segment at C165–A185 threads the bilayer. Over S186 to K192 the chain is Cytoplasmic. A helical membrane pass occupies residues I193–A213. Topologically, residues N214 to N237 are extracellular. Residues F238–W258 traverse the membrane as a helical segment. Residues Y259–I500 lie on the Cytoplasmic side of the membrane. The tract at residues P411–I500 is disordered. Composition is skewed to basic and acidic residues over residues G428–E444 and F466–V485.

The protein belongs to the FNT transporter (TC 1.A.16) family. Homopentamer.

It is found in the cell membrane. It carries out the reaction (S)-lactate(in) + H(+)(in) = (S)-lactate(out) + H(+)(out). The catalysed reaction is formate(in) + H(+)(in) = formate(out) + H(+)(out). The enzyme catalyses pyruvate(out) + H(+)(out) = pyruvate(in) + H(+)(in). It catalyses the reaction acetate(out) + H(+)(out) = acetate(in) + H(+)(in). Its activity is regulated as follows. Inhibited by p-chloromercuribenzene sulfonate (pCMBS). Methyl methanethiosulfonate (MMTS) inhibits L-lactate but not formate transport. Inhibited by the Malaria Box compound MMV007839. Inhibited by BH-296, BH-317, BH-326 and BH-388 compounds. Monocarboxylate-proton symporter; active in acidic-to-neutral pH range. Transports L-lactate and formate. The chain is Formate-nitrite transporter 3 from Toxoplasma gondii (strain ATCC 50611 / Me49).